A 480-amino-acid polypeptide reads, in one-letter code: Immune evasion protein OPG047 (480 aa).

A BTB domain is found at Cys10–Ser90. Residues Cys125–Asn223 enclose the BACK domain. Kelch repeat units follow at residues Val273–Asn319, Lys320–Asn363, Ile365–Arg408, Leu410–Asn447, and Lys448–Lys480.

This sequence belongs to the orthopoxvirus OPG047 family.

Might have a role in the suppression of host immune response. The chain is Immune evasion protein OPG047 (OPG047) from Vaccinia virus (strain Western Reserve) (VACV).